A 921-amino-acid polypeptide reads, in one-letter code: Isoleucine--tRNA ligase (921 aa).

The 'HIGH' region signature appears at 57–67; that stretch reads PYANGELHMGH. Position 552 (glutamate 552) interacts with L-isoleucyl-5'-AMP. Positions 593 to 597 match the 'KMSKS' region motif; that stretch reads KMSKS. Position 596 (lysine 596) interacts with ATP. Residues cysteine 888, cysteine 891, cysteine 908, and cysteine 911 each contribute to the Zn(2+) site.

It belongs to the class-I aminoacyl-tRNA synthetase family. IleS type 1 subfamily. Monomer. Zn(2+) is required as a cofactor.

The protein localises to the cytoplasm. The enzyme catalyses tRNA(Ile) + L-isoleucine + ATP = L-isoleucyl-tRNA(Ile) + AMP + diphosphate. Functionally, catalyzes the attachment of isoleucine to tRNA(Ile). As IleRS can inadvertently accommodate and process structurally similar amino acids such as valine, to avoid such errors it has two additional distinct tRNA(Ile)-dependent editing activities. One activity is designated as 'pretransfer' editing and involves the hydrolysis of activated Val-AMP. The other activity is designated 'posttransfer' editing and involves deacylation of mischarged Val-tRNA(Ile). The polypeptide is Isoleucine--tRNA ligase (Listeria monocytogenes serovar 1/2a (strain ATCC BAA-679 / EGD-e)).